A 310-amino-acid chain; its full sequence is Homoserine kinase (310 aa).

85 to 95 (PKGLGLGSSGA) lines the ATP pocket.

It belongs to the GHMP kinase family. Homoserine kinase subfamily.

The protein resides in the cytoplasm. The enzyme catalyses L-homoserine + ATP = O-phospho-L-homoserine + ADP + H(+). The protein operates within amino-acid biosynthesis; L-threonine biosynthesis; L-threonine from L-aspartate: step 4/5. Catalyzes the ATP-dependent phosphorylation of L-homoserine to L-homoserine phosphate. The chain is Homoserine kinase from Thermoplasma acidophilum (strain ATCC 25905 / DSM 1728 / JCM 9062 / NBRC 15155 / AMRC-C165).